The primary structure comprises 206 residues: Peptidyl-tRNA hydrolase (206 aa).

Tyrosine 19 contacts tRNA. Residue histidine 24 is the Proton acceptor of the active site. TRNA contacts are provided by phenylalanine 70, asparagine 72, and asparagine 118.

It belongs to the PTH family. In terms of assembly, monomer.

The protein localises to the cytoplasm. It carries out the reaction an N-acyl-L-alpha-aminoacyl-tRNA + H2O = an N-acyl-L-amino acid + a tRNA + H(+). In terms of biological role, hydrolyzes ribosome-free peptidyl-tRNAs (with 1 or more amino acids incorporated), which drop off the ribosome during protein synthesis, or as a result of ribosome stalling. Its function is as follows. Catalyzes the release of premature peptidyl moieties from peptidyl-tRNA molecules trapped in stalled 50S ribosomal subunits, and thus maintains levels of free tRNAs and 50S ribosomes. The polypeptide is Peptidyl-tRNA hydrolase (Synechococcus sp. (strain CC9902)).